The chain runs to 369 residues: tRNA(Met) cytidine acetate ligase (369 aa).

ATP is bound by residues 7 to 20 (VAEF…HKYL), glycine 96, asparagine 152, and arginine 175.

Belongs to the TmcAL family.

It localises to the cytoplasm. It catalyses the reaction cytidine(34) in elongator tRNA(Met) + acetate + ATP = N(4)-acetylcytidine(34) in elongator tRNA(Met) + AMP + diphosphate. Its function is as follows. Catalyzes the formation of N(4)-acetylcytidine (ac(4)C) at the wobble position of elongator tRNA(Met), using acetate and ATP as substrates. First activates an acetate ion to form acetyladenylate (Ac-AMP) and then transfers the acetyl group to tRNA to form ac(4)C34. This Streptococcus agalactiae serotype III (strain NEM316) protein is tRNA(Met) cytidine acetate ligase.